Reading from the N-terminus, the 622-residue chain is 1-deoxy-D-xylulose-5-phosphate synthase (622 aa).

Residues H80 and 121 to 123 contribute to the thiamine diphosphate site; that span reads GHS. A Mg(2+)-binding site is contributed by D152. Residues 153 to 154, N181, Y288, and E370 contribute to the thiamine diphosphate site; that span reads GA. N181 is a Mg(2+) binding site.

The protein belongs to the transketolase family. DXPS subfamily. In terms of assembly, homodimer. It depends on Mg(2+) as a cofactor. The cofactor is thiamine diphosphate.

The enzyme catalyses D-glyceraldehyde 3-phosphate + pyruvate + H(+) = 1-deoxy-D-xylulose 5-phosphate + CO2. It functions in the pathway metabolic intermediate biosynthesis; 1-deoxy-D-xylulose 5-phosphate biosynthesis; 1-deoxy-D-xylulose 5-phosphate from D-glyceraldehyde 3-phosphate and pyruvate: step 1/1. Its function is as follows. Catalyzes the acyloin condensation reaction between C atoms 2 and 3 of pyruvate and glyceraldehyde 3-phosphate to yield 1-deoxy-D-xylulose-5-phosphate (DXP). The chain is 1-deoxy-D-xylulose-5-phosphate synthase from Shewanella baltica (strain OS185).